We begin with the raw amino-acid sequence, 218 residues long: DNA-directed RNA polymerase III subunit RPC7-like (218 aa).

The tract at residues 133 to 218 (LPKRPPKTTE…SDDNMDEAIY (86 aa)) is disordered. The span at 139–160 (KTTEDKEETIQKLETLEKKEEE) shows a compositional bias: basic and acidic residues. Composition is skewed to acidic residues over residues 161–193 (VTSE…EETD) and 201–218 (NGED…EAIY).

Belongs to the eukaryotic RPC7 RNA polymerase subunit family. In terms of assembly, component of the RNA polymerase III (Pol III) complex consisting of 17 subunits. Pol III exists as two alternative complexes defined by the mutually exclusive incorporation of subunit POLR3G/RPC7alpha or POLR3GL/RPC7beta. Found in a trimeric complex with POLR3C/RPC3 and POLR3F/RPC6. Directly interacts with POLR3C. In terms of tissue distribution, widely expressed. Expressed in CD4-positive T cells.

Its subcellular location is the nucleus. DNA-dependent RNA polymerase catalyzes the transcription of DNA into RNA using the four ribonucleoside triphosphates as substrates. Specific peripheric component of RNA polymerase III which synthesizes small RNAs, such as 5S rRNA and tRNAs. This chain is DNA-directed RNA polymerase III subunit RPC7-like, found in Homo sapiens (Human).